The primary structure comprises 456 residues: Na(+)/H(+) antiporter NhaA 3 (456 aa).

A run of 11 helical transmembrane segments spans residues 32-52, 87-107, 114-134, 145-165, 174-194, 202-222, 233-253, 318-338, 347-367, 382-402, and 417-437; these read IEATSGAVLLLATVVALTLSN, GLMTLFFFIVALEIKREVVLG, MVALSVVAAAGGMLVPMGLYL, GWGVVMPTDTAFVIGCLALLG, VFLLSLAVVDDLAAILVVAVG, TALALGAVGLVIIRGMALLGV, AIIWLAVNASGIHATIVGVIL, WVAFGVMPLFALANAGVPITI, LAVMAGFVLGKPIGVTAFAWL, WGGLVGGALLTGIGFTMALFI, and LGILAASVVSSVAGLTLLCAL.

Belongs to the NhaA Na(+)/H(+) (TC 2.A.33) antiporter family.

It localises to the cell inner membrane. It carries out the reaction Na(+)(in) + 2 H(+)(out) = Na(+)(out) + 2 H(+)(in). In terms of biological role, na(+)/H(+) antiporter that extrudes sodium in exchange for external protons. The chain is Na(+)/H(+) antiporter NhaA 3 from Acidiphilium cryptum (strain JF-5).